A 558-amino-acid chain; its full sequence is Alpha-1,3-mannosyltransferase MNT2 (558 aa).

Residues 1–6 (MRRKNR) lie on the Cytoplasmic side of the membrane. Residues 7–27 (LFILVVLLGIVLVVYYSQLNS) form a helical; Signal-anchor for type II membrane protein membrane-spanning segment. Residues 28-558 (LDLVEPVQSS…QIVDIWNKDI (531 aa)) are Lumenal-facing. Residue asparagine 187 is glycosylated (N-linked (GlcNAc...) asparagine).

This sequence belongs to the MNN1/MNT family.

It localises to the golgi apparatus membrane. It functions in the pathway protein modification; protein glycosylation. Functionally, mannosyltransferase involved in adding the 4th and 5th mannose residues of O-linked glycans. The polypeptide is Alpha-1,3-mannosyltransferase MNT2 (MNT2) (Saccharomyces cerevisiae (strain ATCC 204508 / S288c) (Baker's yeast)).